The primary structure comprises 156 residues: Peptidyl-prolyl cis-trans isomerase cypE (156 aa).

Positions 2-155 (TEQTVTLQTT…DEIRIIKATA (154 aa)) constitute a PPIase cyclophilin-type domain.

It belongs to the cyclophilin-type PPIase family. In terms of assembly, interacts with snwA.

It is found in the cytoplasm. The protein resides in the nucleus. The enzyme catalyses [protein]-peptidylproline (omega=180) = [protein]-peptidylproline (omega=0). In terms of biological role, catalyzes the cis-trans isomerization of proline imidic peptide bonds in oligopeptides. Plays a role in protein folding, transport and assembly. This Dictyostelium discoideum (Social amoeba) protein is Peptidyl-prolyl cis-trans isomerase cypE (cypE).